The primary structure comprises 491 residues: Probable glycogen synthase 2 (491 aa).

Lys15 serves as a coordination point for ADP-alpha-D-glucose.

Belongs to the glycosyltransferase 1 family. Bacterial/plant glycogen synthase subfamily.

The enzyme catalyses [(1-&gt;4)-alpha-D-glucosyl](n) + ADP-alpha-D-glucose = [(1-&gt;4)-alpha-D-glucosyl](n+1) + ADP + H(+). The protein operates within glycan biosynthesis; glycogen biosynthesis. Functionally, synthesizes alpha-1,4-glucan chains using ADP-glucose. The polypeptide is Probable glycogen synthase 2 (glgA2) (Synechocystis sp. (strain ATCC 27184 / PCC 6803 / Kazusa)).